Here is a 258-residue protein sequence, read N- to C-terminus: Global transcriptional regulator CodY (258 aa).

The GAF domain stretch occupies residues 1-156 (MSILLNKTRK…SATIVGLEIL (156 aa)). Positions 204–223 (ASKIADKVGITRSVIVNALR) form a DNA-binding region, H-T-H motif.

The protein belongs to the CodY family.

The protein localises to the cytoplasm. Functionally, DNA-binding global transcriptional regulator which is involved in the adaptive response to starvation and acts by directly or indirectly controlling the expression of numerous genes in response to nutrient availability. During rapid exponential growth, CodY is highly active and represses genes whose products allow adaptation to nutrient depletion. This is Global transcriptional regulator CodY from Clostridium acetobutylicum (strain ATCC 824 / DSM 792 / JCM 1419 / IAM 19013 / LMG 5710 / NBRC 13948 / NRRL B-527 / VKM B-1787 / 2291 / W).